Reading from the N-terminus, the 157-residue chain is Transcriptional repressor NrdR (157 aa).

The disordered stretch occupies residues 1 to 21; sequence MRCPYCSSEDSQVKDSRPAED. A zinc finger spans residues 3–34; that stretch reads CPYCSSEDSQVKDSRPAEDGNAIRRRRICPDC. A compositionally biased stretch (basic and acidic residues) spans 11 to 21; it reads SQVKDSRPAED. The 91-residue stretch at 49-139 folds into the ATP-cone domain; sequence LMIIKKTGRK…VYRDFSHAED (91 aa).

The protein belongs to the NrdR family. It depends on Zn(2+) as a cofactor.

Functionally, negatively regulates transcription of bacterial ribonucleotide reductase nrd genes and operons by binding to NrdR-boxes. This chain is Transcriptional repressor NrdR, found in Sinorhizobium fredii (strain NBRC 101917 / NGR234).